Consider the following 892-residue polypeptide: Protein RRP6-like 3 (892 aa).

In terms of domain architecture, 3'-5' exonuclease spans 119–287 (YVWVETESQL…IADSLTTELK (169 aa)). An HRDC domain is found at 350–436 (SLNAEELVRK…CSHLDDIYKM (87 aa)). The tract at residues 785 to 811 (VDDSGDGTSEGDGAKELNDTQCNGNTL) is disordered.

Its subcellular location is the cytoplasm. It is found in the cytosol. In Arabidopsis thaliana (Mouse-ear cress), this protein is Protein RRP6-like 3.